Here is a 358-residue protein sequence, read N- to C-terminus: Cytoplasmic dynein 2 light intermediate chain 1 (358 aa).

2 disordered regions span residues 1–35 (MPKV…EDAH) and 307–358 (ESTR…ALDP). Residues 24-33 (TDEEEAEEED) are compositionally biased toward acidic residues. Composition is skewed to basic and acidic residues over residues 307 to 320 (ESTR…DPVK) and 333 to 349 (RAQK…EQAK).

This sequence belongs to the dynein light intermediate chain family. Light intermediate chain of the cytoplasmic dynein complex 2, a multisubunit complex composed at least of eleven different proteins. The cytoplasmic dynein 2 complex consists of two catalytic heavy chains (HCs) and a number of non-catalytic subunits presented by intermediate chains (ICs), light intermediate chains (LICs) and light chains (LCs). Among them, a heavy chain (DYNC2H1), two intermediate chains (DYNC2I2 and DYNC2I1), a light intermediate chain (DYNC2LI1), and a light chain (DYNLT2B) are unique to the dynein-2 complex, but a subset of light chains are also shared by dynein-1 and dynein-2 complexes. Dynein-2 complex is built around two copies of cytoplasmic dynein 2 heavy chain 1 (DYNC2H1). The C-terminal region forms the motor domain, which converts the energy from ATP hydrolysis into movement. Its N-terminal region forms the tail, an extended structure that binds the other subunits and holds the two heavy chains in a homodimer.

It is found in the cytoplasm. The protein localises to the cell projection. It localises to the cilium. Its subcellular location is the cytoskeleton. The protein resides in the cilium basal body. It is found in the cilium axoneme. The protein localises to the microtubule organizing center. It localises to the centrosome. Acts as one of several non-catalytic accessory components of the cytoplasmic dynein 2 complex (dynein-2 complex), a motor protein complex that drives the movement of cargos along microtubules within cilia and flagella in concert with the intraflagellar transport (IFT) system, facilitating the assembly of these organelles. The sequence is that of Cytoplasmic dynein 2 light intermediate chain 1 (dync2li1) from Danio rerio (Zebrafish).